The chain runs to 302 residues: N-acetylmuramic acid 6-phosphate etherase (302 aa).

The 164-residue stretch at 58-221 (IGESFLNGGR…STGAMVKTGK (164 aa)) folds into the SIS domain. Glu86 (proton donor) is an active-site residue. Glu117 is a catalytic residue.

It belongs to the GCKR-like family. MurNAc-6-P etherase subfamily. As to quaternary structure, homodimer.

It carries out the reaction N-acetyl-D-muramate 6-phosphate + H2O = N-acetyl-D-glucosamine 6-phosphate + (R)-lactate. The protein operates within amino-sugar metabolism; N-acetylmuramate degradation. Functionally, specifically catalyzes the cleavage of the D-lactyl ether substituent of MurNAc 6-phosphate, producing GlcNAc 6-phosphate and D-lactate. This Clostridium botulinum (strain Langeland / NCTC 10281 / Type F) protein is N-acetylmuramic acid 6-phosphate etherase.